A 750-amino-acid chain; its full sequence is 5-methyltetrahydropteroyltriglutamate--homocysteine methyltransferase (750 aa).

5-methyltetrahydropteroyltri-L-glutamate is bound by residues 15 to 18 (RELK) and Lys-114. L-homocysteine contacts are provided by residues 425-427 (IGS) and Glu-478. L-methionine is bound by residues 425-427 (IGS) and Glu-478. Trp-555 provides a ligand contact to 5-methyltetrahydropteroyltri-L-glutamate. Residue Asp-593 coordinates L-homocysteine. Asp-593 provides a ligand contact to L-methionine. Glu-599 lines the 5-methyltetrahydropteroyltri-L-glutamate pocket. Residues His-636, Cys-638, and Glu-660 each coordinate Zn(2+). His-689 serves as the catalytic Proton donor. Residue Cys-721 participates in Zn(2+) binding.

It belongs to the vitamin-B12 independent methionine synthase family. The cofactor is Zn(2+).

The enzyme catalyses 5-methyltetrahydropteroyltri-L-glutamate + L-homocysteine = tetrahydropteroyltri-L-glutamate + L-methionine. It functions in the pathway amino-acid biosynthesis; L-methionine biosynthesis via de novo pathway; L-methionine from L-homocysteine (MetE route): step 1/1. In terms of biological role, catalyzes the transfer of a methyl group from 5-methyltetrahydrofolate to homocysteine resulting in methionine formation. In Streptococcus sanguinis (strain SK36), this protein is 5-methyltetrahydropteroyltriglutamate--homocysteine methyltransferase.